A 331-amino-acid polypeptide reads, in one-letter code: Phenylalanine--tRNA ligase alpha subunit (331 aa).

Glutamate 252 is a Mg(2+) binding site.

The protein belongs to the class-II aminoacyl-tRNA synthetase family. Phe-tRNA synthetase alpha subunit type 1 subfamily. As to quaternary structure, tetramer of two alpha and two beta subunits. It depends on Mg(2+) as a cofactor.

Its subcellular location is the cytoplasm. The catalysed reaction is tRNA(Phe) + L-phenylalanine + ATP = L-phenylalanyl-tRNA(Phe) + AMP + diphosphate + H(+). The chain is Phenylalanine--tRNA ligase alpha subunit from Xanthomonas axonopodis pv. citri (strain 306).